Here is a 182-residue protein sequence, read N- to C-terminus: Nascent polypeptide-associated complex subunit alpha (182 aa).

An NAC-A/B domain is found at 17 to 81; it reads NKNEKKAKEL…AKVDDMNQRI (65 aa). The segment at 120 to 148 is disordered; the sequence is ASLQGGESNADAAEDDNEEVDETGINPKD. The span at 131 to 141 shows a compositional bias: acidic residues; sequence AAEDDNEEVDE. In terms of domain architecture, UBA spans 144 to 182; that stretch reads INPKDIDLIVEQTRVSRGSAVKALKKHDGDMVNALMELS.

Belongs to the NAC-alpha family. In terms of assembly, part of the nascent polypeptide-associated complex (NAC), consisting of EGD2 and EGD1. NAC associates with ribosomes via EGD1.

It localises to the cytoplasm. The protein resides in the nucleus. In terms of biological role, component of the nascent polypeptide-associated complex (NAC), a dynamic component of the ribosomal exit tunnel, protecting the emerging polypeptides from interaction with other cytoplasmic proteins to ensure appropriate nascent protein targeting. The NAC complex also promotes mitochondrial protein import by enhancing productive ribosome interactions with the outer mitochondrial membrane and blocks the inappropriate interaction of ribosomes translating non-secretory nascent polypeptides with translocation sites in the membrane of the endoplasmic reticulum. EGD2 may also be involved in transcription regulation. In Lodderomyces elongisporus (strain ATCC 11503 / CBS 2605 / JCM 1781 / NBRC 1676 / NRRL YB-4239) (Yeast), this protein is Nascent polypeptide-associated complex subunit alpha (EGD2).